A 329-amino-acid chain; its full sequence is Endo-beta-N-acetylglucosaminidase F3 (329 aa).

A signal peptide (or 40, or 41) is located at residues Met1–Ser39. In terms of domain architecture, GH18 spans Gly48–Asn329. A glycan (O-linked (Man...) threonine) is linked at Thr88. The Proton donor role is filled by Glu167.

Belongs to the glycosyl hydrolase 18 family. Monomer. Carbohydrate at Thr-88 consists of (2-OMe)Man1-4GlcNAcU1-4GlcU1-4Glc1-4(2-OMe)GlcU1-4[(2-OMe)Rham1-2]Man.

Its subcellular location is the secreted. It carries out the reaction an N(4)-(oligosaccharide-(1-&gt;3)-[oligosaccharide-(1-&gt;6)]-beta-D-Man-(1-&gt;4)-beta-D-GlcNAc-(1-&gt;4)-alpha-D-GlcNAc)-L-asparaginyl-[protein] + H2O = an oligosaccharide-(1-&gt;3)-[oligosaccharide-(1-&gt;6)]-beta-D-Man-(1-&gt;4)-D-GlcNAc + N(4)-(N-acetyl-beta-D-glucosaminyl)-L-asparaginyl-[protein]. Its function is as follows. Endohydrolysis of the di-N-acetylchitobiosyl unit in high-mannose glycopeptides and glycoproteins. Hydrolyzes bi- and triantennary glycans. The presence of a core-bound fucose greatly augments endo F3 activity on biantennary and, presumably, triantennary oligosaccharides. This Elizabethkingia meningoseptica (Chryseobacterium meningosepticum) protein is Endo-beta-N-acetylglucosaminidase F3 (endOF3).